We begin with the raw amino-acid sequence, 409 residues long: Tyrosine--tRNA ligase (409 aa).

A 'HIGH' region motif is present at residues 43–52 (PTAPDLHLGH). The short motif at 227-231 (KMSKS) is the 'KMSKS' region element. Lys-230 is a binding site for ATP. The 62-residue stretch at 338–399 (LALPQLLKLA…GKRKFAKVTL (62 aa)) folds into the S4 RNA-binding domain.

This sequence belongs to the class-I aminoacyl-tRNA synthetase family. TyrS type 2 subfamily. As to quaternary structure, homodimer.

It localises to the cytoplasm. It carries out the reaction tRNA(Tyr) + L-tyrosine + ATP = L-tyrosyl-tRNA(Tyr) + AMP + diphosphate + H(+). In terms of biological role, catalyzes the attachment of tyrosine to tRNA(Tyr) in a two-step reaction: tyrosine is first activated by ATP to form Tyr-AMP and then transferred to the acceptor end of tRNA(Tyr). The protein is Tyrosine--tRNA ligase of Nitrosomonas europaea (strain ATCC 19718 / CIP 103999 / KCTC 2705 / NBRC 14298).